Here is a 230-residue protein sequence, read N- to C-terminus: Protein LURP-one-related 11 (230 aa).

This sequence belongs to the LOR family.

Its function is as follows. Might be related to the phospholipid scramblase and tubby-like superfamily of membrane tethered transcription factors. The sequence is that of Protein LURP-one-related 11 from Arabidopsis thaliana (Mouse-ear cress).